The following is a 298-amino-acid chain: Trimeric intracellular cation channel type A (298 aa).

The Lumenal portion of the chain corresponds to 1 to 18 (MDLMSALSLGELALSFSR). The chain crosses the membrane as a helical span at residues 19 to 39 (VPLFPVFDLSYFIVSIIYLKY). Residues 40–51 (EPGAVELSRRHP) are Cytoplasmic-facing. The chain crosses the membrane as a helical span at residues 52–72 (VASWLCAMLHCFGSYILADLL). Topologically, residues 73-85 (LGEPIIDYFSNSS) are lumenal. Position 74 (Gly-74) interacts with Ca(2+). Residues 86–106 (SILLASGVWYLIFFCPLDLFY) form a helical membrane-spanning segment. The Cytoplasmic portion of the chain corresponds to 107-144 (KCVCFLPVKLIFVAMKEVVRVRKIAVGIHHAHHHYHHG). 2 residues coordinate a 1,2-diacyl-sn-glycero-3-phospho-(1D-myo-inositol-4,5-bisphosphate): Lys-122 and Arg-126. A helical membrane pass occupies residues 145 to 165 (WFIMIATGWVKGSGVALLSNV). The Lumenal portion of the chain corresponds to 166–178 (EQLLRGVWKPETN). A helical membrane pass occupies residues 179–199 (EILHMSFPTKASLYGAILFTL). Residues 200–209 (QQTRWLPVSK) are Cytoplasmic-facing. A helical membrane pass occupies residues 210 to 230 (ASLIFVFTMFMVSCKVFLTAT). Residues 231–234 (HSHS) are Lumenal-facing. A helical transmembrane segment spans residues 235-255 (SPFDILEGYICPVLFGATWGG). Topologically, residues 256 to 298 (DHHHDNHGAPHGMGLGTQHSGLPAKAKEELGEGSRKKKTKKAD) are cytoplasmic. A disordered region spans residues 260–298 (DNHGAPHGMGLGTQHSGLPAKAKEELGEGSRKKKTKKAD). A compositionally biased stretch (basic and acidic residues) spans 280-289 (KAKEELGEGS).

This sequence belongs to the TMEM38 family. In terms of assembly, homotrimer; conformation seems to be controled by binding to diacylglycerol (DAG). Expressed at high levels in heart and striated muscle. Also detected in brain, lung and kidney.

Its subcellular location is the sarcoplasmic reticulum membrane. The protein localises to the nucleus membrane. It catalyses the reaction K(+)(in) = K(+)(out). Its activity is regulated as follows. Channel activity is activated by a change of voltage within the sarcoplasmic reticulum lumen and blocked by luminal high Ca(2+) levels. In terms of biological role, intracellular monovalent cation channel required for maintenance of rapid intracellular calcium release. Acts as a potassium counter-ion channel that functions in synchronization with calcium release from intracellular stores. Opened by a change of voltage within the sarcoplasmic reticulum lumen. The polypeptide is Trimeric intracellular cation channel type A (Tmem38a) (Mus musculus (Mouse)).